The following is a 310-amino-acid chain: MGLFESVKSIDWEQESFPTYQDLGFLPLFAVFFPTIRFLLDRFVFEKLASLVIYGRMSTNKSDNIKDRKKNSPKVRKFKESAWKCIYYLSAELLALSVTYNEPWFSNTLYFWIGPGDQIWPDQPMKMKLKFLYMFAAGFYTYSIFALVFWETRRSDFGVSMGHHITTLVLIVLSYICRLTRAGSVILALHDASDVFLEIGKMSKYCGAESLASISFVLFALSWVVLRLIYYPFWILWSTSYQIIMTVDKEKHPNGPILYYMFNTLLYFLLVLHIFWWVLIYRMLVKQVQDRGKLSEDVRSDSESDDEHED.

6 consecutive transmembrane segments (helical) span residues 16–36 (SFPT…FPTI), 85–105 (CIYY…EPWF), 131–151 (FLYM…VFWE), 157–177 (FGVS…SYIC), 216–236 (FVLF…FWIL), and 260–280 (YMFN…WVLI). In terms of domain architecture, TLC spans 76–289 (RKFKESAWKC…IYRMLVKQVQ (214 aa)). 2 positions are modified to phosphoserine: Ser300 and Ser302.

Expressed ubiquitously at high levels. Not observed in pollen.

Its subcellular location is the endoplasmic reticulum membrane. It catalyses the reaction (4R)-hydroxysphinganine + a fatty acyl-CoA = an N-acyl-(4R)-4-hydroxysphinganine + CoA + H(+). The catalysed reaction is hexacosanoyl-CoA + (4R)-hydroxysphinganine = N-hexacosanoyl-(4R)-hydroxysphinganine + CoA + H(+). It carries out the reaction tetracosanoyl-CoA + (4R)-hydroxysphinganine = N-tetracosanoyl-(4R)-hydroxysphinganine + CoA + H(+). Its pathway is sphingolipid metabolism. Its activity is regulated as follows. Inhibited by the mycotoxin fumonisin B(1), a sphingosine analog mycotoxins produced by pathogenic fungi. Repressed by divalent cation such as magnesium Mg(2+), copper Cu(2+), zinc Zn(2+), manganese Mn(2+), calcium Ca(2+) and cobalt Co(2+). Functionally, essential for plant growth, promotes cell division in root meristems. Catalyzes the biosynthesis of ceramide sphingolipids with C(16) to C(28) fatty acids, structural membrane lipids involved in membrane trafficking (e.g. early endosomes) and cell polarity (e.g. polar auxin transport related proteins); mostly active with t18:0 and saturated very long saturated fatty acids (C24:0 and C26:0), such as long-chain base (LCB) phytosphingosine (t18:0), lignoceroyl- and hexacosanoyl-CoAs. Mediates resistance to sphinganine-analog mycotoxins (SAMs, e.g. fumonisin B(1)) by restoring the sphingolipid biosynthesis. Could salvage the transport of GPI-anchored proteins from the endoplasmic reticulum to the Golgi apparatus in ceramides-depleted cells after SAM exposure. May prevent precocious cell death by delaying PR1 accumulation during aging. Contributes to hypoxic conditions tolerance (e.g. submergences), especially in the dark, by promoting the formation of very-long-chain (VLC) ceramide species (22:1, 24:1 and 26:1) and of VLC unsaturated ceramides, which are modulating CTR1-mediated ethylene signaling leading to endoplasmic reticulum (ER)-to-nucleus translocation of EIN2 and EIN3. This Arabidopsis thaliana (Mouse-ear cress) protein is Ceramide synthase LOH1.